The chain runs to 235 residues: Large ribosomal subunit protein uL1 (235 aa).

The protein belongs to the universal ribosomal protein uL1 family. In terms of assembly, part of the 50S ribosomal subunit.

Its function is as follows. Binds directly to 23S rRNA. The L1 stalk is quite mobile in the ribosome, and is involved in E site tRNA release. In terms of biological role, protein L1 is also a translational repressor protein, it controls the translation of the L11 operon by binding to its mRNA. This chain is Large ribosomal subunit protein uL1, found in Prochlorococcus marinus (strain MIT 9303).